A 331-amino-acid chain; its full sequence is UDP-GalNAc:beta-1,3-N-acetylgalactosaminyltransferase 1 (331 aa).

At 1–20 (MAPALPITLPSKMSLRSLKW) the chain is on the cytoplasmic side. The chain crosses the membrane as a helical; Signal-anchor for type II membrane protein span at residues 21–43 (SLLLLSLLSFLVMWYLSLPHYNV). The Lumenal portion of the chain corresponds to 44–331 (IERVNWMYFY…VMLRNTTCHY (288 aa)). N-linked (GlcNAc...) asparagine glycans are attached at residues Asn72, Asn154, Asn198, Asn212, and Asn326.

The protein belongs to the glycosyltransferase 31 family. It depends on Mg(2+) as a cofactor.

It localises to the golgi apparatus membrane. It catalyses the reaction a globoside Gb3Cer (d18:1(4E)) + UDP-N-acetyl-alpha-D-galactosamine = a globoside Gb4Cer (d18:1(4E)) + UDP + H(+). It participates in protein modification; protein glycosylation. Its function is as follows. Transfers N-acetylgalactosamine onto globotriaosylceramide. Plays a critical role in preimplantation stage embryonic development. This is UDP-GalNAc:beta-1,3-N-acetylgalactosaminyltransferase 1 (B3GALNT1) from Sus scrofa (Pig).